The sequence spans 255 residues: Small ribosomal subunit protein uS2 (255 aa).

This sequence belongs to the universal ribosomal protein uS2 family.

The polypeptide is Small ribosomal subunit protein uS2 (Streptococcus pyogenes serotype M3 (strain ATCC BAA-595 / MGAS315)).